A 423-amino-acid polypeptide reads, in one-letter code: Tyrosine--tRNA ligase (423 aa).

Position 35 (Tyr35) interacts with L-tyrosine. The short motif at 40–49 is the 'HIGH' region element; it reads PTAPSLHAGH. L-tyrosine contacts are provided by Tyr170 and Gln174. The 'KMSKS' region motif lies at 230 to 234; sequence KFGKS. Residue Lys233 coordinates ATP. The S4 RNA-binding domain occupies 355-412; it reads DLITDLLVATGLSASKGAARRTIAEGGVSVNNMKIDSDEWTPQASDFLHGRWLVLRRG.

This sequence belongs to the class-I aminoacyl-tRNA synthetase family. TyrS type 1 subfamily. As to quaternary structure, homodimer.

The protein resides in the cytoplasm. It catalyses the reaction tRNA(Tyr) + L-tyrosine + ATP = L-tyrosyl-tRNA(Tyr) + AMP + diphosphate + H(+). In terms of biological role, catalyzes the attachment of tyrosine to tRNA(Tyr) in a two-step reaction: tyrosine is first activated by ATP to form Tyr-AMP and then transferred to the acceptor end of tRNA(Tyr). The protein is Tyrosine--tRNA ligase of Mycobacterium sp. (strain KMS).